A 448-amino-acid polypeptide reads, in one-letter code: Phosphoglucosamine mutase (448 aa).

Ser100 serves as the catalytic Phosphoserine intermediate. Positions 100, 240, 242, and 244 each coordinate Mg(2+). Ser100 is subject to Phosphoserine.

The protein belongs to the phosphohexose mutase family. Requires Mg(2+) as cofactor. Post-translationally, activated by phosphorylation.

The enzyme catalyses alpha-D-glucosamine 1-phosphate = D-glucosamine 6-phosphate. Its function is as follows. Catalyzes the conversion of glucosamine-6-phosphate to glucosamine-1-phosphate. This chain is Phosphoglucosamine mutase, found in Bacillus mycoides (strain KBAB4) (Bacillus weihenstephanensis).